Here is a 212-residue protein sequence, read N- to C-terminus: Uracil phosphoribosyltransferase (212 aa).

Residues Arg-78, Arg-103, and 130–138 (DPMLATGSS) contribute to the 5-phospho-alpha-D-ribose 1-diphosphate site. Residues Ile-193 and 198–200 (GDA) contribute to the uracil site. Residue Asp-199 coordinates 5-phospho-alpha-D-ribose 1-diphosphate.

It belongs to the UPRTase family. Mg(2+) serves as cofactor.

The catalysed reaction is UMP + diphosphate = 5-phospho-alpha-D-ribose 1-diphosphate + uracil. The protein operates within pyrimidine metabolism; UMP biosynthesis via salvage pathway; UMP from uracil: step 1/1. With respect to regulation, allosterically activated by GTP. Catalyzes the conversion of uracil and 5-phospho-alpha-D-ribose 1-diphosphate (PRPP) to UMP and diphosphate. This Pseudomonas savastanoi pv. phaseolicola (strain 1448A / Race 6) (Pseudomonas syringae pv. phaseolicola (strain 1448A / Race 6)) protein is Uracil phosphoribosyltransferase.